The primary structure comprises 627 residues: tRNA uridine 5-carboxymethylaminomethyl modification enzyme MnmG (627 aa).

Residues 13–18 (GGGHAG), valine 125, and serine 180 contribute to the FAD site. NAD(+) is bound at residue 274 to 288 (GPRYCPSIEDKVVRF). Glutamine 371 serves as a coordination point for FAD.

The protein belongs to the MnmG family. In terms of assembly, homodimer. Heterotetramer of two MnmE and two MnmG subunits. FAD is required as a cofactor.

Its subcellular location is the cytoplasm. Functionally, NAD-binding protein involved in the addition of a carboxymethylaminomethyl (cmnm) group at the wobble position (U34) of certain tRNAs, forming tRNA-cmnm(5)s(2)U34. The chain is tRNA uridine 5-carboxymethylaminomethyl modification enzyme MnmG from Francisella tularensis subsp. tularensis (strain FSC 198).